We begin with the raw amino-acid sequence, 201 residues long: Dephospho-CoA kinase (201 aa).

The 198-residue stretch at 4 to 201 (VIGLTGGIAS…LLDTWSNIEK (198 aa)) folds into the DPCK domain. 12–17 (ASGKST) lines the ATP pocket.

It belongs to the CoaE family.

The protein resides in the cytoplasm. The enzyme catalyses 3'-dephospho-CoA + ATP = ADP + CoA + H(+). It functions in the pathway cofactor biosynthesis; coenzyme A biosynthesis; CoA from (R)-pantothenate: step 5/5. Its function is as follows. Catalyzes the phosphorylation of the 3'-hydroxyl group of dephosphocoenzyme A to form coenzyme A. The protein is Dephospho-CoA kinase of Bacillus licheniformis (strain ATCC 14580 / DSM 13 / JCM 2505 / CCUG 7422 / NBRC 12200 / NCIMB 9375 / NCTC 10341 / NRRL NRS-1264 / Gibson 46).